Reading from the N-terminus, the 312-residue chain is Acetaldehyde dehydrogenase (312 aa).

12-15 (SGNV) contributes to the NAD(+) binding site. Catalysis depends on Cys132, which acts as the Acyl-thioester intermediate. NAD(+) is bound by residues 163-171 (SAGPGTRAN) and Asn290.

It belongs to the acetaldehyde dehydrogenase family.

The catalysed reaction is acetaldehyde + NAD(+) + CoA = acetyl-CoA + NADH + H(+). This Pseudomonas putida (Arthrobacter siderocapsulatus) protein is Acetaldehyde dehydrogenase (cbzQ).